Here is a 935-residue protein sequence, read N- to C-terminus: Dual 3',5'-cyclic-AMP and -GMP phosphodiesterase 11A (935 aa).

The interval R41–F125 is disordered. Positions A54–S69 are enriched in low complexity. Phosphoserine occurs at positions 162, 163, and 239. GAF domains are found at residues D217–I370 and D402–I558. Residue S424 coordinates 3',5'-cyclic GMP. Residues S588–R912 form the PDEase domain. The Proton donor role is filled by H664. A divalent metal cation contacts are provided by H668, H704, D705, and D816. The disordered stretch occupies residues V915–L935.

The protein belongs to the cyclic nucleotide phosphodiesterase family. A divalent metal cation is required as a cofactor. Isoform 1 is expressed in brain, heart, kidney and liver, but not in prostate. Isoform 2 is specifically expressed in testis. Isoform 3 is expressed in various tissues including brain, lung, skeletal muscle, spleen, testis and prostate.

The protein resides in the cytoplasm. It localises to the cytosol. The catalysed reaction is 3',5'-cyclic GMP + H2O = GMP + H(+). It catalyses the reaction 3',5'-cyclic AMP + H2O = AMP + H(+). Inhibited by 3-isobutyl-1-methylxanthine (IBMX), zaprinast and dipyridamole. cGMP acts as an allosteric activator. Plays a role in signal transduction by regulating the intracellular concentration of cyclic nucleotides cAMP and cGMP. Catalyzes the hydrolysis of both cAMP and cGMP to 5'-AMP and 5'-GMP, respectively. The polypeptide is Dual 3',5'-cyclic-AMP and -GMP phosphodiesterase 11A (Rattus norvegicus (Rat)).